A 297-amino-acid polypeptide reads, in one-letter code: MIDLSTLTTERRNDETFNLDQMTVKEALVKMNNEDKKVAYAVEEALPNIEPVISSAIEAFNKGGRLIYMGAGTSGRLGVLDAAECVPTFGVPATQVVGLIAGGDKAMTVAVEGAEDSLELGRQDLIDLNLSENDLVLGIAASGRTPYVIGALDYAKEIGAKRASLSCNLNAEISKHAEFPIEVDCGPEFLTGSTRLKSGTAQKLILNMISTISMIGIGKVYNNLMVDVKPTNEKLVERSKRIIMQATDCTYEEAEEKFNEANQDVKLAIVMLLTDCAAEEGKTKLVKANGFVKNTLN.

The SIS domain occupies 56-219; that stretch reads AIEAFNKGGR…STISMIGIGK (164 aa). The active-site Proton donor is Glu-84. The active site involves Glu-115.

This sequence belongs to the GCKR-like family. MurNAc-6-P etherase subfamily. In terms of assembly, homodimer.

The enzyme catalyses N-acetyl-D-muramate 6-phosphate + H2O = N-acetyl-D-glucosamine 6-phosphate + (R)-lactate. It functions in the pathway amino-sugar metabolism; N-acetylmuramate degradation. Specifically catalyzes the cleavage of the D-lactyl ether substituent of MurNAc 6-phosphate, producing GlcNAc 6-phosphate and D-lactate. This is N-acetylmuramic acid 6-phosphate etherase from Lactococcus lactis subsp. cremoris (strain MG1363).